The following is a 40-amino-acid chain: Mu-thomitoxin-Hme1b (40 aa).

3 disulfide bridges follow: Cys-2-Cys-18, Cys-9-Cys-22, and Cys-17-Cys-33.

It belongs to the neurotoxin 19 (CSTX) family. Contains 3 disulfide bonds. As to expression, expressed by the venom gland.

It localises to the secreted. Functionally, blocks the Nav1.2/SCN2A, Nav1.4/SCN4A, Nav1.5/SCN5A and Nav1.6/SCN8A sodium channels. Shows a slight preference for the Nav1.2 and Nav1.4 channels. Reduces the peak amplitude of the sodium current and negatively shifts the steady-state inactivation process. Does not shift the threshold potential of activation or the voltage corresponding to maximal current. Does not change the reversal potential of the sodium current. May act on site 1 of the receptor. In Heriaeus mellotteei (Crab spider), this protein is Mu-thomitoxin-Hme1b.